Consider the following 335-residue polypeptide: MSIREDRNQDATIYLGNLDEKVTDSILFELCLQAGPVVNIHIPRDRVRNSHNGFGFCEFLHEQDVEYACQILNQVKLFGKPIRVNRASQDRGVNTLIGANLFVGNLDPLVDERVLYDTFSALGQLVKAPQVARDENGRSKGYGFVSYDSFETADAAIEAMNNQFLMNKPITVSYAFKREGKGERHGDIAERKLAAAAKKNKVAVTPQSTLPPGFSPATPAPTSAANTPATIAATSIPPVPNVPLVGATTAVPPLSIPNVLPFTAAQHFPGMPAMPMMNVPMGPGGAPLVPPPPPGMVMASPSPAAATIPGAPVMPNIPFYQTINAQNGYSQQQRR.

RRM domains lie at 13–84 (IYLG…PIRV) and 101–172 (LFVG…PITV). A disordered region spans residues 204–223 (VTPQSTLPPGFSPATPAPTS).

This sequence belongs to the SF3B4 family.

Its subcellular location is the nucleus. The protein is Spliceosome-associated protein 49 (sap49) of Schizosaccharomyces pombe (strain 972 / ATCC 24843) (Fission yeast).